Reading from the N-terminus, the 465-residue chain is Glycine-rich cell wall structural protein 1.8 (465 aa).

Positions 1-30 (MATIHRLPSLVFLVLLALGVCSARRALLTL) are cleaved as a signal peptide. A run of 8 repeats spans residues 205–226 (HGGGGGGGQGGGAGGGYGAGGE), 227–248 (HGGGAGGGQGGGAGGGYGAGGE), 249–270 (HGGGAGGGQGGGAGGGYGAGGE), 271–292 (HGGGAGGGQGGGAGGGYGAGGE), 293–314 (HGGGAGGGQGGGAGGGYGAGGE), 315–336 (HGGGGGGGQGGGAGGGYAAVGE), 337–358 (HGGGYGGGQGGGDGGGYGTGGE), and 359–380 (HGGGYGGGQGGGAGGGYGTGGE). Positions 205–380 (HGGGGGGGQG…AGGGYGTGGE (176 aa)) are 8 X 22 AA tandem repeats of H-G-G-G-[GAY]-G-G-G-Q-G-G-G-[AD]-G-G-G-Y-[GA]-[AT]-[GV]-G-E.

As to expression, expressed in young hypocotyls.

Its subcellular location is the secreted. It localises to the cell wall. Functionally, responsible for plasticity of the cell wall. This Phaseolus vulgaris (Kidney bean) protein is Glycine-rich cell wall structural protein 1.8.